Here is a 212-residue protein sequence, read N- to C-terminus: uncharacterized protein (212 aa).

Transmembrane regions (helical) follow at residues 20 to 40 (FLIGFFTEYGYWAVLFVLIIC), 70 to 90 (LMLLVSMIGVLAGDSCMYWLG), 155 to 175 (FVLIDFCAAIISVPIWIYLGE), and 192 to 212 (QIVIYIFIGYLYYSFLEMEKI).

Belongs to the DedA family.

Its subcellular location is the cell membrane. This is an uncharacterized protein from Haemophilus influenzae (strain ATCC 51907 / DSM 11121 / KW20 / Rd).